A 237-amino-acid chain; its full sequence is Histone H1E (237 aa).

Over residues methionine 1 to proline 21 the composition is skewed to low complexity. Disordered regions lie at residues methionine 1–glutamate 56 and leucine 109–lysine 237. Positions glutamate 26 to proline 42 are enriched in basic and acidic residues. The 75-residue stretch at threonine 50–proline 124 folds into the H15 domain. Residues alanine 182 to lysine 195 show a composition bias toward low complexity. Residues proline 200 to glutamate 209 are compositionally biased toward basic and acidic residues. Basic residues predominate over residues alanine 210–lysine 237.

It belongs to the histone H1/H5 family.

It localises to the nucleus. The protein localises to the chromosome. Its function is as follows. Histones H1 are necessary for the condensation of nucleosome chains into higher-order structures. The sequence is that of Histone H1E from Chironomus tentans (Midge).